The sequence spans 237 residues: Proteasome subunit alpha (237 aa).

Belongs to the peptidase T1A family. In terms of assembly, the 20S proteasome core is composed of 14 alpha and 14 beta subunits that assemble into four stacked heptameric rings, resulting in a barrel-shaped structure. The two inner rings, each composed of seven catalytic beta subunits, are sandwiched by two outer rings, each composed of seven alpha subunits. The catalytic chamber with the active sites is on the inside of the barrel. Has a gated structure, the ends of the cylinder being occluded by the N-termini of the alpha-subunits. Is capped by the proteasome-associated ATPase, ARC.

The protein resides in the cytoplasm. It functions in the pathway protein degradation; proteasomal Pup-dependent pathway. Its activity is regulated as follows. The formation of the proteasomal ATPase ARC-20S proteasome complex, likely via the docking of the C-termini of ARC into the intersubunit pockets in the alpha-rings, may trigger opening of the gate for substrate entry. Interconversion between the open-gate and close-gate conformations leads to a dynamic regulation of the 20S proteasome proteolysis activity. Functionally, component of the proteasome core, a large protease complex with broad specificity involved in protein degradation. The protein is Proteasome subunit alpha of Kineococcus radiotolerans (strain ATCC BAA-149 / DSM 14245 / SRS30216).